The sequence spans 796 residues: AUGMIN subunit 5 (796 aa).

The disordered stretch occupies residues 79–120 (HGGSSNASIGSSVNPGKEESKSKGRRKDKTVTGESSSYAEDR). Positions 80 to 92 (GGSSNASIGSSVN) are enriched in polar residues. 2 coiled-coil regions span residues 115 to 191 (SYAE…EATR) and 462 to 501 (GKEREAAGLRASLNTLLSEIQRLNKLCAERKEAEDSLKKK).

It belongs to the HAUS5 family. As to quaternary structure, part of the augmin complex composed of 8 subunits. The complex acts on microtubules and interacts with gamma-tubulin in spindles and the phragmoplast.

The protein localises to the cytoplasm. It localises to the cytoskeleton. It is found in the spindle. Its subcellular location is the phragmoplast. Involved in microtubules reorganization during spindle and phragmoplast development. The polypeptide is AUGMIN subunit 5 (Arabidopsis thaliana (Mouse-ear cress)).